The sequence spans 658 residues: Protein teflon (658 aa).

The segment at 33–56 (LYCHFCRDLFTQLPEFLRHLQGAH) adopts a C2H2-type 1 zinc-finger fold. 2 disordered regions span residues 78-127 (EQDD…SEQK) and 151-175 (HINNESKPENGGFNGPCKKASSESN). The segment covering 100-111 (IPAKSEDSRAID) has biased composition (basic and acidic residues). A compositionally biased stretch (polar residues) spans 118 to 127 (DNSPVKSEQK). The C2H2-type 2; degenerate zinc finger occupies 608–630 (YFCKCCDDIFTLNEDYTRHLVSQ). Residues 634 to 657 (YQCTKCIKAFKYRGHFEKHLQNVH) form a C2H2-type 3 zinc finger.

The protein belongs to the Teflon family.

It localises to the nucleus. The protein localises to the chromosome. In terms of biological role, specifically required in males for proper segregation of autosomal bivalents at meiosis I. Expression is required in the male germ line prior to spermatocyte stage S4. May have a role as a bridging molecule maintaining adhesion to hold autosome bivalents together via heterochromatic connections. This is Protein teflon from Drosophila erecta (Fruit fly).